The sequence spans 235 residues: Small ribosomal subunit protein uS3 (235 aa).

A KH type-2 domain is found at Ile-39–Arg-107. The disordered stretch occupies residues Gln-215–Ala-235.

It belongs to the universal ribosomal protein uS3 family. Part of the 30S ribosomal subunit. Forms a tight complex with proteins S10 and S14.

Its function is as follows. Binds the lower part of the 30S subunit head. Binds mRNA in the 70S ribosome, positioning it for translation. This chain is Small ribosomal subunit protein uS3, found in Rhodopseudomonas palustris (strain TIE-1).